Here is a 305-residue protein sequence, read N- to C-terminus: Methionyl-tRNA formyltransferase (305 aa).

111-114 is a (6S)-5,6,7,8-tetrahydrofolate binding site; the sequence is SLLP.

The protein belongs to the Fmt family.

It catalyses the reaction L-methionyl-tRNA(fMet) + (6R)-10-formyltetrahydrofolate = N-formyl-L-methionyl-tRNA(fMet) + (6S)-5,6,7,8-tetrahydrofolate + H(+). Functionally, attaches a formyl group to the free amino group of methionyl-tRNA(fMet). The formyl group appears to play a dual role in the initiator identity of N-formylmethionyl-tRNA by promoting its recognition by IF2 and preventing the misappropriation of this tRNA by the elongation apparatus. The polypeptide is Methionyl-tRNA formyltransferase (Helicobacter pylori (strain P12)).